Consider the following 536-residue polypeptide: 2-isopropylmalate synthase (536 aa).

Residues 8-273 enclose the Pyruvate carboxyltransferase domain; it reads VLIFDTTLRD…FFGKDSESPT (266 aa). 4 residues coordinate Mn(2+): aspartate 17, histidine 208, histidine 210, and asparagine 244. The segment at 408-536 is regulatory domain; the sequence is KLHLVQVSCG…PQHDVVKANL (129 aa).

Belongs to the alpha-IPM synthase/homocitrate synthase family. LeuA type 1 subfamily. In terms of assembly, homodimer. It depends on Mn(2+) as a cofactor.

It localises to the cytoplasm. The enzyme catalyses 3-methyl-2-oxobutanoate + acetyl-CoA + H2O = (2S)-2-isopropylmalate + CoA + H(+). It participates in amino-acid biosynthesis; L-leucine biosynthesis; L-leucine from 3-methyl-2-oxobutanoate: step 1/4. Functionally, catalyzes the condensation of the acetyl group of acetyl-CoA with 3-methyl-2-oxobutanoate (2-ketoisovalerate) to form 3-carboxy-3-hydroxy-4-methylpentanoate (2-isopropylmalate). In Prochlorococcus marinus (strain SARG / CCMP1375 / SS120), this protein is 2-isopropylmalate synthase.